Consider the following 148-residue polypeptide: Ubiquitin-conjugating enzyme E2-16 kDa (148 aa).

In terms of domain architecture, UBC core spans 2–148 (SSSKRIAKEL…AKEWTKKYAV (147 aa)). Ser-12 is subject to Phosphoserine. Residue Cys-86 is the Glycyl thioester intermediate of the active site. Residue Lys-91 forms a Glycyl lysine isopeptide (Lys-Gly) (interchain with G-Cter in ubiquitin) linkage.

It belongs to the ubiquitin-conjugating enzyme family. Component of the RSP5-UBA1-UBC5 ubiquitin ligase complex composed of E3 RSP5, E1 UBA1 and E2 UBC5. The N-terminus is blocked.

It carries out the reaction S-ubiquitinyl-[E1 ubiquitin-activating enzyme]-L-cysteine + [E2 ubiquitin-conjugating enzyme]-L-cysteine = [E1 ubiquitin-activating enzyme]-L-cysteine + S-ubiquitinyl-[E2 ubiquitin-conjugating enzyme]-L-cysteine.. Its pathway is protein modification; protein ubiquitination. Functionally, catalyzes the covalent attachment of ubiquitin to other proteins. Mediates the selective degradation of short-lived and abnormal proteins. The RSP5-UBA1-UBC5 ubiquitin ligase complex ubiquitinates RPO21 forming 'Lys-63'-linked polyubiquitin chains. In Saccharomyces cerevisiae (strain ATCC 204508 / S288c) (Baker's yeast), this protein is Ubiquitin-conjugating enzyme E2-16 kDa (UBC5).